Consider the following 879-residue polypeptide: Protein translocase subunit SecA (879 aa).

ATP is bound by residues Gln-87, 105–109, and Asp-509; that span reads GEGKT. Positions 834 to 879 are disordered; the sequence is IAEDSEKLKPITGTKKPKRNDPCPCGSGKKYKNCCGQSGPKKGLLA. Zn(2+)-binding residues include Cys-856, Cys-858, Cys-867, and Cys-868.

It belongs to the SecA family. As to quaternary structure, monomer and homodimer. Part of the essential Sec protein translocation apparatus which comprises SecA, SecYEG and auxiliary proteins SecDF-YajC and YidC. It depends on Zn(2+) as a cofactor.

Its subcellular location is the cell inner membrane. The protein resides in the cytoplasm. The catalysed reaction is ATP + H2O + cellular proteinSide 1 = ADP + phosphate + cellular proteinSide 2.. In terms of biological role, part of the Sec protein translocase complex. Interacts with the SecYEG preprotein conducting channel. Has a central role in coupling the hydrolysis of ATP to the transfer of proteins into and across the cell membrane, serving as an ATP-driven molecular motor driving the stepwise translocation of polypeptide chains across the membrane. In Sulfurovum sp. (strain NBC37-1), this protein is Protein translocase subunit SecA.